The following is a 417-amino-acid chain: NADH-quinone oxidoreductase subunit D (417 aa).

It belongs to the complex I 49 kDa subunit family. In terms of assembly, NDH-1 is composed of 14 different subunits. Subunits NuoB, C, D, E, F, and G constitute the peripheral sector of the complex.

It localises to the cell inner membrane. It catalyses the reaction a quinone + NADH + 5 H(+)(in) = a quinol + NAD(+) + 4 H(+)(out). Its function is as follows. NDH-1 shuttles electrons from NADH, via FMN and iron-sulfur (Fe-S) centers, to quinones in the respiratory chain. The immediate electron acceptor for the enzyme in this species is believed to be ubiquinone. Couples the redox reaction to proton translocation (for every two electrons transferred, four hydrogen ions are translocated across the cytoplasmic membrane), and thus conserves the redox energy in a proton gradient. The protein is NADH-quinone oxidoreductase subunit D of Methylibium petroleiphilum (strain ATCC BAA-1232 / LMG 22953 / PM1).